The primary structure comprises 351 residues: Fe(3+) ions import ATP-binding protein FbpC (351 aa).

Residues 7–237 (VVLKNICKRF…PKSMFMANFM (231 aa)) form the ABC transporter domain. 39-46 (GPSGCGKT) is a binding site for ATP.

It belongs to the ABC transporter superfamily. Fe(3+) ion importer (TC 3.A.1.10) family. The complex is composed of two ATP-binding proteins (FbpC), two transmembrane proteins (FbpB) and a solute-binding protein (FbpA).

The protein localises to the cell inner membrane. It catalyses the reaction Fe(3+)(out) + ATP + H2O = Fe(3+)(in) + ADP + phosphate + H(+). Functionally, part of the ABC transporter complex FbpABC involved in Fe(3+) ions import. Responsible for energy coupling to the transport system. This is Fe(3+) ions import ATP-binding protein FbpC from Vibrio cholerae serotype O1 (strain ATCC 39315 / El Tor Inaba N16961).